The primary structure comprises 448 residues: tRNA-2-methylthio-N(6)-dimethylallyladenosine synthase (448 aa).

In terms of domain architecture, MTTase N-terminal spans 2–120 (KKYRIIVFGC…LPELIGKVIE (119 aa)). Positions 11, 47, 81, 158, 162, and 165 each coordinate [4Fe-4S] cluster. The 231-residue stretch at 144–374 (RKEGVRAWVT…IKLQNKISLE (231 aa)) folds into the Radical SAM core domain. A TRAM domain is found at 377–440 (EEEVGQTQEV…LAHLTGILSY (64 aa)).

This sequence belongs to the methylthiotransferase family. MiaB subfamily. Monomer. Requires [4Fe-4S] cluster as cofactor.

Its subcellular location is the cytoplasm. It catalyses the reaction N(6)-dimethylallyladenosine(37) in tRNA + (sulfur carrier)-SH + AH2 + 2 S-adenosyl-L-methionine = 2-methylsulfanyl-N(6)-dimethylallyladenosine(37) in tRNA + (sulfur carrier)-H + 5'-deoxyadenosine + L-methionine + A + S-adenosyl-L-homocysteine + 2 H(+). Its function is as follows. Catalyzes the methylthiolation of N6-(dimethylallyl)adenosine (i(6)A), leading to the formation of 2-methylthio-N6-(dimethylallyl)adenosine (ms(2)i(6)A) at position 37 in tRNAs that read codons beginning with uridine. This Pelotomaculum thermopropionicum (strain DSM 13744 / JCM 10971 / SI) protein is tRNA-2-methylthio-N(6)-dimethylallyladenosine synthase.